The sequence spans 349 residues: B3 domain-containing protein At5g24050 (349 aa).

A DNA-binding region (TF-B3) is located at residues 240 to 341; that stretch reads FNNLLRNDFL…ILCFAMEQSS (102 aa).

Its subcellular location is the nucleus. The chain is B3 domain-containing protein At5g24050 from Arabidopsis thaliana (Mouse-ear cress).